Consider the following 146-residue polypeptide: MGFTDKQEALVNSSWESFKQNPGNSVLFYTIILEKAPAAKGMFSFLKDSAGVQDSPKLQSHAEKVFGMVRDSAAQLRATGGVVLGDATLGAIHIQKGVVDPHFAVVKEALLKTIKEVSGDKWSEELNTAWEVAYDALATAIKKAMV.

Residues 2-146 form the Globin domain; it reads GFTDKQEALV…LATAIKKAMV (145 aa). Tyrosine 29 is subject to Nitrated tyrosine. Serine 44 is a binding site for heme b. A Phosphoserine modification is found at serine 44. Residue histidine 61 coordinates O2. The heme b site is built by lysine 64, histidine 93, and lysine 96. At tyrosine 134 the chain carries Nitrated tyrosine.

This sequence belongs to the plant globin family. As to quaternary structure, monomer. Post-translationally, nitrated in effective nodules and particularly in hypoxic conditions; this mechanism may play a protective role in the symbiosis by buffering toxic peroxynitrite NO(2)(-). Nitration level decrease during nodule senescence. Phosphorylation at Ser-44 disrupts the molecular environment of its porphyrin ring oxygen binding pocket, thus leading to a reduced oxygen consumption and to the delivery of oxygen O(2) to symbiosomes. As to expression, root nodules.

It localises to the cytoplasm. Its subcellular location is the cytosol. The protein localises to the nucleus. Functionally, leghemoglobin that reversibly binds oxygen O(2) through a pentacoordinated heme iron. In root nodules, facilitates the diffusion of oxygen to the bacteroids while preventing the bacterial nitrogenase from being inactivated by buffering dioxygen, nitric oxide and carbon monoxide, and promoting the formation of reactive oxygen species (ROS, e.g. H(2)O(2)). This role is essential for symbiotic nitrogen fixation (SNF). In Medicago sativa (Alfalfa), this protein is Leghemoglobin-3.